Here is a 297-residue protein sequence, read N- to C-terminus: Large ribosomal subunit protein uL24m (297 aa).

Serine 2 is subject to N-acetylserine. The KOW domain occupies phenylalanine 63–aspartate 96.

The protein belongs to the universal ribosomal protein uL24 family. In terms of assembly, component of the mitochondrial large ribosomal subunit (mt-LSU). Mature yeast 74S mitochondrial ribosomes consist of a small (37S) and a large (54S) subunit. The 37S small subunit contains a 15S ribosomal RNA (15S mt-rRNA) and 34 different proteins. The 54S large subunit contains a 21S rRNA (21S mt-rRNA) and 46 different proteins. uL24m forms the wall of the exit tunnel.

It is found in the mitochondrion. Its function is as follows. Component of the mitochondrial ribosome (mitoribosome), a dedicated translation machinery responsible for the synthesis of mitochondrial genome-encoded proteins, including at least some of the essential transmembrane subunits of the mitochondrial respiratory chain. The mitoribosomes are attached to the mitochondrial inner membrane and translation products are cotranslationally integrated into the membrane. This chain is Large ribosomal subunit protein uL24m (MRPL40), found in Saccharomyces cerevisiae (strain ATCC 204508 / S288c) (Baker's yeast).